Here is a 59-residue protein sequence, read N- to C-terminus: Small, acid-soluble spore protein H 2 (59 aa).

It belongs to the SspH family.

It is found in the spore core. This is Small, acid-soluble spore protein H 2 from Geobacillus kaustophilus (strain HTA426).